Reading from the N-terminus, the 724-residue chain is Protein BCH1 (724 aa).

Residues 51 to 65 (TTATASANDNGATSN) are compositionally biased toward low complexity. Residues 51-71 (TTATASANDNGATSNINGQDP) form a disordered region. The segment at 711 to 724 (LNFLKNFTNDTFDN) is CHS5-binding.

It belongs to the CHAPS family. Component of the CHS5/6 complex composed of the 4 CHAPS proteins BCH1, BCH2, BUD7, and CHS6 as well as at least CHS5 and GTP-bound ARF1. The complex interacts with the cargo protein CHS3.

The protein localises to the golgi apparatus. It is found in the trans-Golgi network membrane. Functionally, member of the CHS5-ARF1P-binding proteins (CHAPS) which mediates export of specific cargo proteins, including chitin synthase CHS3. This is Protein BCH1 (BCH1) from Saccharomyces cerevisiae (strain ATCC 204508 / S288c) (Baker's yeast).